The following is a 446-amino-acid chain: Transcriptional adapter 2-alpha (446 aa).

A ZZ-type zinc finger spans residues 12 to 69 (FDKPPCRGCSSYLTEPYVKCAECGPPPFLLCLQCFTRGFEYKKHQSDHTYEIMTSDFP). 8 residues coordinate Zn(2+): Cys-17, Cys-20, Cys-31, Cys-34, Cys-42, Cys-45, His-55, and His-59. One can recognise an SANT domain in the interval 70–122 (VLDPNWTAQEEMALLEAVMDCGFGNWQDVANQMCTKSKEECEKHYMKHFINNP). A disordered region spans residues 345-375 (DIDSGPTPAAPIPSNSGRRSAPPLNLTGLPG). One can recognise an SWIRM domain in the interval 359-446 (NSGRRSAPPL…LIREGYITKA (88 aa)). Residues 429–438 (KTRKIYDFLI) mediate DNA binding.

It localises to the nucleus. Its subcellular location is the chromosome. Component of some complex with histone acetyltransferase activity. Required for the function of some acidic activation domains, which activate transcription from a distant site. Binds double-stranded DNA. Binds dinucleosomes, probably at the linker region between neighboring nucleosomes. Plays a role in chromatin remodeling. The chain is Transcriptional adapter 2-alpha (TADA2A) from Gallus gallus (Chicken).